The following is a 204-amino-acid chain: Large ribosomal subunit protein eL15 (204 aa).

Residues 172 to 182 show a composition bias toward basic residues; the sequence is RGLRGRGHLHN. The interval 172 to 204 is disordered; that stretch reads RGLRGRGHLHNKAPPSRRANWKRNQTLSLPRYR. The span at 193–204 shows a compositional bias: polar residues; that stretch reads KRNQTLSLPRYR.

Belongs to the eukaryotic ribosomal protein eL15 family.

The protein is Large ribosomal subunit protein eL15 (RPL15) of Petunia hybrida (Petunia).